Here is a 100-residue protein sequence, read N- to C-terminus: NADH-quinone oxidoreductase subunit K 2 (100 aa).

The next 3 membrane-spanning stretches (helical) occupy residues 2–22 (LAIE…TIGV), 29–49 (IVIF…FIAF), and 61–81 (FVFF…ALMI).

This sequence belongs to the complex I subunit 4L family. As to quaternary structure, NDH-1 is composed of 14 different subunits. Subunits NuoA, H, J, K, L, M, N constitute the membrane sector of the complex.

Its subcellular location is the cell inner membrane. The enzyme catalyses a quinone + NADH + 5 H(+)(in) = a quinol + NAD(+) + 4 H(+)(out). In terms of biological role, NDH-1 shuttles electrons from NADH, via FMN and iron-sulfur (Fe-S) centers, to quinones in the respiratory chain. The immediate electron acceptor for the enzyme in this species is believed to be ubiquinone. Couples the redox reaction to proton translocation (for every two electrons transferred, four hydrogen ions are translocated across the cytoplasmic membrane), and thus conserves the redox energy in a proton gradient. In Geobacter sp. (strain M21), this protein is NADH-quinone oxidoreductase subunit K 2.